A 485-amino-acid chain; its full sequence is tRNA sulfurtransferase (485 aa).

Positions 63 to 167 constitute a THUMP domain; sequence DKLVERLSCM…NELLYLVTAI (105 aa). ATP contacts are provided by residues 185 to 186, Lys267, Gly289, and Gln298; that span reads LI. A disulfide bridge links Cys346 with Cys458. Residues 406–485 enclose the Rhodanese domain; sequence LAENEVILDI…FNNIKVYRQN (80 aa). Catalysis depends on Cys458, which acts as the Cysteine persulfide intermediate.

The protein belongs to the ThiI family.

It is found in the cytoplasm. It carries out the reaction [ThiI sulfur-carrier protein]-S-sulfanyl-L-cysteine + a uridine in tRNA + 2 reduced [2Fe-2S]-[ferredoxin] + ATP + H(+) = [ThiI sulfur-carrier protein]-L-cysteine + a 4-thiouridine in tRNA + 2 oxidized [2Fe-2S]-[ferredoxin] + AMP + diphosphate. The enzyme catalyses [ThiS sulfur-carrier protein]-C-terminal Gly-Gly-AMP + S-sulfanyl-L-cysteinyl-[cysteine desulfurase] + AH2 = [ThiS sulfur-carrier protein]-C-terminal-Gly-aminoethanethioate + L-cysteinyl-[cysteine desulfurase] + A + AMP + 2 H(+). Its pathway is cofactor biosynthesis; thiamine diphosphate biosynthesis. Its function is as follows. Catalyzes the ATP-dependent transfer of a sulfur to tRNA to produce 4-thiouridine in position 8 of tRNAs, which functions as a near-UV photosensor. Also catalyzes the transfer of sulfur to the sulfur carrier protein ThiS, forming ThiS-thiocarboxylate. This is a step in the synthesis of thiazole, in the thiamine biosynthesis pathway. The sulfur is donated as persulfide by IscS. In Tolumonas auensis (strain DSM 9187 / NBRC 110442 / TA 4), this protein is tRNA sulfurtransferase.